The primary structure comprises 64 residues: Phi-buthitoxin-Hj1a (64 aa).

Residues 1-18 form the signal peptide; the sequence is MNSFVVVLLLFIAILCNA. 3 disulfide bridges follow: Cys29/Cys43, Cys36/Cys49, and Cys42/Cys58.

Belongs to the scorpion calcin-like family. In terms of tissue distribution, expressed by the venom gland.

The protein localises to the secreted. Its function is as follows. May increase intracellular calcium release through the activation of nuclear inositol 1,4,5-trisphosphate receptors (ITPR) of cardiomyocytes, thereby causing an increase in the contraction frequency of these cells. The sequence is that of Phi-buthitoxin-Hj1a from Hottentotta judaicus (Black scorpion).